A 797-amino-acid chain; its full sequence is Interphotoreceptor matrix proteoglycan 1 (797 aa).

An N-terminal signal peptide occupies residues 1-20 (MYLETRRAIFVFWIFLQVQG). N-linked (GlcNAc...) asparagine glycosylation is found at Asn42, Asn143, Asn191, and Asn215. Positions 232–354 (EEQRVELSVS…QPEIYLTATD (123 aa)) constitute an SEA 1 domain. 4 O-linked (GalNAc...) threonine glycosylation sites follow: Thr403, Thr421, Thr432, and Thr442. The region spanning 571 to 684 (RELVVFFSLR…YSLNIEPADQ (114 aa)) is the SEA 2 domain. Asn592 and Asn616 each carry an N-linked (GlcNAc...) asparagine glycan. The Heparin- and hyaluronan-binding signature appears at 621–629 (KQLEILNFR). N-linked (GlcNAc...) asparagine glycosylation is found at Asn630 and Asn648.

Post-translationally, the N-terminus is blocked. Highly glycosylated (N- and O-linked carbohydrates and sialic acid). As to expression, expressed in the retina (at protein level). In the retina, specifically expressed by cone and rod photoreceptor cells. Localizes to cone and rod photoreceptor cells surrounding the interphotoreceptor matrix of the retina.

The protein resides in the cell projection. It is found in the cilium. It localises to the photoreceptor outer segment. Its subcellular location is the secreted. The protein localises to the extracellular space. The protein resides in the extracellular matrix. It is found in the interphotoreceptor matrix. It localises to the photoreceptor inner segment. Its function is as follows. Chondroitin sulfate-, heparin- and hyaluronan-binding protein. May serve to form a basic macromolecular scaffold comprising the insoluble interphotoreceptor matrix. The polypeptide is Interphotoreceptor matrix proteoglycan 1 (Homo sapiens (Human)).